A 234-amino-acid chain; its full sequence is Adenosine 5'-phosphosulfate reductase (234 aa).

Residues Cys-120, Cys-121, Cys-203, and Cys-206 each contribute to the [4Fe-4S] cluster site. Cys-229 functions as the Nucleophile; cysteine thiosulfonate intermediate in the catalytic mechanism.

It belongs to the PAPS reductase family. CysH subfamily. [4Fe-4S] cluster serves as cofactor.

It is found in the cytoplasm. The enzyme catalyses [thioredoxin]-disulfide + sulfite + AMP + 2 H(+) = adenosine 5'-phosphosulfate + [thioredoxin]-dithiol. The protein operates within sulfur metabolism; hydrogen sulfide biosynthesis; sulfite from sulfate. In terms of biological role, catalyzes the formation of sulfite from adenosine 5'-phosphosulfate (APS) using thioredoxin as an electron donor. In Bacillus mycoides (strain KBAB4) (Bacillus weihenstephanensis), this protein is Adenosine 5'-phosphosulfate reductase.